Here is a 248-residue protein sequence, read N- to C-terminus: tRNA (guanine-N(1)-)-methyltransferase (248 aa).

Residues Gly117 and 137-142 (LGDFVL) contribute to the S-adenosyl-L-methionine site.

The protein belongs to the RNA methyltransferase TrmD family. Homodimer.

The protein localises to the cytoplasm. The enzyme catalyses guanosine(37) in tRNA + S-adenosyl-L-methionine = N(1)-methylguanosine(37) in tRNA + S-adenosyl-L-homocysteine + H(+). In terms of biological role, specifically methylates guanosine-37 in various tRNAs. This Herminiimonas arsenicoxydans protein is tRNA (guanine-N(1)-)-methyltransferase.